A 365-amino-acid polypeptide reads, in one-letter code: Glycerol dehydrogenase (365 aa).

Residues D37, G94, K95, T116, and S119 each coordinate NAD(+). Position 121 (D121) interacts with glycerol. NAD(+) is bound by residues S125, L127, and Y131. Mn(2+) contacts are provided by D171, H254, and H271. Residue H254 participates in glycerol binding.

It belongs to the iron-containing alcohol dehydrogenase family. Homohexamer. The cofactor is Mn(2+).

It carries out the reaction glycerol + NAD(+) = dihydroxyacetone + NADH + H(+). It catalyses the reaction hydroxyacetone + NADH + H(+) = (S)-propane-1,2-diol + NAD(+). The protein operates within polyol metabolism; glycerol fermentation; glycerone phosphate from glycerol (oxidative route): step 1/2. With respect to regulation, inhibited by zinc. Functionally, catalyzes the NAD-dependent oxidation of glycerol to dihydroxyacetone (glycerone). Allows microorganisms to utilize glycerol as a source of carbon under anaerobic conditions. Exhibits a rather broad substrate specificity since it can also oxidize 1,2-propanediol and 2,3-butanediol and reduce dihydroxyacetone. Cannot use NADP(+) as an electron acceptor for the oxidation of glycerol. The polypeptide is Glycerol dehydrogenase (Citrobacter freundii).